Reading from the N-terminus, the 261-residue chain is Small ribosomal subunit protein uS2 (261 aa).

A disordered region spans residues 222-261 (GKALREQDGEANEEQPISEEEKKEVLEEAMSEEDFEGDKE). Composition is skewed to acidic residues over residues 230 to 239 (GEANEEQPIS) and 248 to 261 (EEAM…GDKE).

Belongs to the universal ribosomal protein uS2 family.

The polypeptide is Small ribosomal subunit protein uS2 (Campylobacter lari (strain RM2100 / D67 / ATCC BAA-1060)).